Consider the following 204-residue polypeptide: Photosynthetic NDH subunit of subcomplex B 3, chloroplastic (204 aa).

2 disordered regions span residues 1 to 24 and 45 to 68; these read MGSVQLSGSGLVASLPPNHSFSHK and KTVRAISTAPASQPPAADEPDEPP. Residues 1–48 constitute a chloroplast transit peptide; sequence MGSVQLSGSGLVASLPPNHSFSHKTKLNKPNSYFFRSKHNAARTKTVR. The 2Fe-2S ferredoxin-type domain maps to 76 to 180; the sequence is HSVLLPDGTP…STGLVVIQQL (105 aa). Residues Cys120, Cys126, Cys129, and Cys162 each contribute to the [2Fe-2S] cluster site.

As to quaternary structure, part of the chloroplast NDH complex, composed of a mixture of chloroplast and nucleus encoded subunits. Component of the NDH subcomplex B, at least composed of PnsB1, PnsB2, PnsB3, PnsB4 and PnsB5.

The protein resides in the plastid. Its subcellular location is the chloroplast thylakoid membrane. Functionally, NDH shuttles electrons from NAD(P)H:plastoquinone, via FMN and iron-sulfur (Fe-S) centers, to quinones in the photosynthetic chain and possibly in a chloroplast respiratory chain. The immediate electron acceptor for the enzyme in this species is believed to be plastoquinone. Couples the redox reaction to proton translocation, and thus conserves the redox energy in a proton gradient. This is Photosynthetic NDH subunit of subcomplex B 3, chloroplastic from Arabidopsis thaliana (Mouse-ear cress).